The sequence spans 347 residues: Biotin synthase (347 aa).

The Radical SAM core domain occupies 54–273 (NHVETASLLS…IAVARIMMPK (220 aa)). Residues Cys69, Cys73, and Cys76 each coordinate [4Fe-4S] cluster. The [2Fe-2S] cluster site is built by Cys113, Cys144, Cys204, and Arg277.

It belongs to the radical SAM superfamily. Biotin synthase family. Homodimer. [4Fe-4S] cluster is required as a cofactor. [2Fe-2S] cluster serves as cofactor.

It catalyses the reaction (4R,5S)-dethiobiotin + (sulfur carrier)-SH + 2 reduced [2Fe-2S]-[ferredoxin] + 2 S-adenosyl-L-methionine = (sulfur carrier)-H + biotin + 2 5'-deoxyadenosine + 2 L-methionine + 2 oxidized [2Fe-2S]-[ferredoxin]. Its pathway is cofactor biosynthesis; biotin biosynthesis; biotin from 7,8-diaminononanoate: step 2/2. Functionally, catalyzes the conversion of dethiobiotin (DTB) to biotin by the insertion of a sulfur atom into dethiobiotin via a radical-based mechanism. The protein is Biotin synthase of Afipia carboxidovorans (strain ATCC 49405 / DSM 1227 / KCTC 32145 / OM5) (Oligotropha carboxidovorans).